A 237-amino-acid chain; its full sequence is MALVKICGLQSLEAAETAVNNGASLVGVIMVPGRERTVKQEVAREISQMVREKRISKGSKYLDSRQLRKEWDDCPLEDWFEYNVKEINSSGPFLVGVFRNQSIDEIQQAIHTHGLDFVQLHGSEDFDSYIRNIPVPVITRYTDNAVDGLTGEDLAINRALVLLDSEQGGEGKTIDWARAQKFGERRGKYLLAGGVTPDNVAHARSHTGCIGVDVSGGVETNASKDMDKITQFIRNAT.

It belongs to the TrpF family.

It carries out the reaction N-(5-phospho-beta-D-ribosyl)anthranilate = 1-(2-carboxyphenylamino)-1-deoxy-D-ribulose 5-phosphate. It participates in amino-acid biosynthesis; L-tryptophan biosynthesis; L-tryptophan from chorismate: step 3/5. The protein is N-(5'-phosphoribosyl)anthranilate isomerase (TRP1) of Komagataella pastoris (Yeast).